We begin with the raw amino-acid sequence, 630 residues long: Amino acid transporter heavy chain SLC3A2 (630 aa).

An N-acetylmethionine modification is found at Met-1. Residue Glu-2 is modified to N-acetylserine. A Phosphoserine modification is found at Glu-2. A disordered region spans residues 15–39; the sequence is IPRQLPGSHSEAGVQGLSAGDDSEL. At 102 to 184 the chain is on the cytoplasmic side; that stretch reads MSQDTEVDMK…SPGWVRTRWA (83 aa). Ser-103 is modified (phosphoserine). Thr-106 carries the phosphothreonine modification. Ser-134 carries the phosphoserine modification. Lys-147 participates in a covalent cross-link: Glycyl lysine isopeptide (Lys-Gly) (interchain with G-Cter in ubiquitin). Phosphoserine is present on Ser-165. A Glycyl lysine isopeptide (Lys-Gly) (interchain with G-Cter in SUMO2) cross-link involves residue Lys-166. A helical; Signal-anchor for type II membrane protein transmembrane segment spans residues 185-205; sequence LLLLFWLGWLGMLAGAVVIIV. Topologically, residues 206–630 are extracellular; the sequence is RAPRCRELPA…GLLLRFPYAA (425 aa). N-linked (GlcNAc...) asparagine glycans are attached at residues Asn-365 and Asn-381. Phosphoserine is present on residues Ser-406, Ser-408, and Ser-410. Asn-424 is a glycosylation site (N-linked (GlcNAc...) (complex) asparagine). An N-linked (GlcNAc...) asparagine glycan is attached at Asn-506. A phosphoserine mark is found at Ser-527 and Ser-531.

As to quaternary structure, disulfide-linked heterodimer with a non-glycosylated catalytic light subunit (SLC7A5, SLC7A6, SLC7A7, SLC7A8, SLC7A10 or SLC7A11). Interacts with TLCD3A/CT120. Interacts with ICAM1. Constitutively and specifically associates with beta-1 integrins (alpha-2/beta-1, alpha-3/beta-1, alpha-5/beta-1 and alpha-6/beta-1), but minimally with alpha-4/beta-1. Interacts with LAPTM4B; recruits SLC3A2 and SLC7A5/LAT1 to lysosomes to promote leucine uptake into these organelles and is required for mTORC1 activation. (Microbial infection) Interacts with hepatitis C virus/HCV envelope glycoprotein E2; the interaction may facilitate viral entry into host cell. In terms of processing, N-glycosylated; N-glycosylation is crucial for trafficking and stability of SLC3A2 to the plasma membrane. Phosphorylation on Ser-406; Ser-408 or Ser-410 and on Ser-527 or Ser-531 by ecto-protein kinases favors heterotypic cell-cell interactions. Expressed ubiquitously in all tissues tested with highest levels detected in kidney, placenta and testis and weakest level in thymus. During gestation, expression in the placenta was significantly stronger at full-term than at the mid-trimester stage. Expressed in HUVECS and at low levels in resting peripheral blood T-lymphocytes and quiescent fibroblasts. Also expressed in fetal liver and in the astrocytic process of primary astrocytic gliomas. Expressed in retinal endothelial cells and in the intestinal epithelial cell line C2BBe1.

It is found in the apical cell membrane. It localises to the cell membrane. The protein resides in the cell junction. The protein localises to the lysosome membrane. Its subcellular location is the melanosome. It is found in the basolateral cell membrane. Its function is as follows. Acts as a chaperone that facilitates biogenesis and trafficking of functional transporters heterodimers to the plasma membrane. Forms heterodimer with SLC7 family transporters (SLC7A5, SLC7A6, SLC7A7, SLC7A8, SLC7A10 and SLC7A11), a group of amino-acid antiporters. Heterodimers function as amino acids exchangers, the specificity of the substrate depending on the SLC7A subunit. Heterodimers SLC3A2/SLC7A6 or SLC3A2/SLC7A7 mediate the uptake of dibasic amino acids. Heterodimer SLC3A2/SLC7A11 functions as an antiporter by mediating the exchange of extracellular anionic L-cystine and intracellular L-glutamate across the cellular plasma membrane. SLC3A2/SLC7A10 translocates small neutral L- and D-amino acids across the plasma membrane. SLC3A2/SLC75 or SLC3A2/SLC7A8 translocates neutral amino acids with broad specificity, thyroid hormones and L-DOPA. SLC3A2 is essential for plasma membrane localization, stability, and the transport activity of SLC7A5 and SLC7A8. When associated with LAPTM4B, the heterodimer SLC7A5 is recruited to lysosomes to promote leucine uptake into these organelles, and thereby mediates mTORC1 activation. Modulates integrin-related signaling and is essential for integrin-dependent cell spreading, migration and tumor progression. In terms of biological role, (Microbial infection) In case of hepatitis C virus/HCV infection, the complex formed by SLC3A2 and SLC7A5/LAT1 plays a role in HCV propagation by facilitating viral entry into host cell and increasing L-leucine uptake-mediated mTORC1 signaling activation, thereby contributing to HCV-mediated pathogenesis. (Microbial infection) Acts as a receptor for malaria parasite Plasmodium vivax (Thai isolate) in immature red blood cells. The sequence is that of Amino acid transporter heavy chain SLC3A2 from Homo sapiens (Human).